A 256-amino-acid polypeptide reads, in one-letter code: Endonuclease NucS (256 aa).

The interval 62–97 is disordered; that stretch reads AAKSAQHSRESVAGGAVDGDSATHSPESVAAGEPEK.

This sequence belongs to the NucS endonuclease family.

Its subcellular location is the cytoplasm. Its function is as follows. Cleaves both 3' and 5' ssDNA extremities of branched DNA structures. The polypeptide is Endonuclease NucS (Bifidobacterium longum (strain NCC 2705)).